The chain runs to 226 residues: E3 ubiquitin-protein ligase RNF186 (226 aa).

An RING-type zinc finger spans residues 39–85 (CLVCREPYSGVRPPKLLGCQHAFCAVCLKLLLCVQDDAWSIPCPLCR). The disordered stretch occupies residues 121–143 (GLANPATLTAGQPREAGEEEQDA). The next 2 helical transmembrane spans lie at 157 to 177 (HLLL…PGVI) and 179 to 199 (WVLS…CSHP).

As to quaternary structure, interacts with BNIP1. Polyubiquitinated. 'Lys-29' autoubiquitination leads to proteasomal degradation.

The protein resides in the endoplasmic reticulum membrane. The enzyme catalyses S-ubiquitinyl-[E2 ubiquitin-conjugating enzyme]-L-cysteine + [acceptor protein]-L-lysine = [E2 ubiquitin-conjugating enzyme]-L-cysteine + N(6)-ubiquitinyl-[acceptor protein]-L-lysine.. It functions in the pathway protein modification; protein ubiquitination. E3 ubiquitin protein ligase that is part of an apoptotic signaling pathway activated by endoplasmic reticulum stress. Stimulates the expression of proteins specific of the unfolded protein response (UPR), ubiquitinates BNIP1 and regulates its localization to the mitochondrion and induces calcium release from the endoplasmic reticulum that ultimately leads to cell apoptosis. Plays a role in the maintenance of intestinal homeostasis and clearance of enteric pathogens. Upon NOD2 stimulation, ubiquitinates the ER stress sensor activating transcription factor 6/ATF6 and promotes the unfolded protein response UPR. Participates in basal level of autophagy maintenance by regulating the ubiquitination of EPHB2. Upon stimulation by ligand EFNB1, ubiquitinates EPHB2 and further recruits MAP1LC3B for autophagy induction. Controls nutrient sensing by ubiquitinating Sestrin-2/SESN2, which is an intracellular sensor of cytosolic leucine and inhibitor of mTORC1 activity. This Bos taurus (Bovine) protein is E3 ubiquitin-protein ligase RNF186.